The following is a 93-amino-acid chain: uncharacterized protein (93 aa).

The interval 41 to 62 (RSANRIPTTSSTSTSGTIPTTT) is disordered. Over residues 46–62 (IPTTSSTSTSGTIPTTT) the composition is skewed to low complexity.

This is an uncharacterized protein from Dictyostelium discoideum (Social amoeba).